Here is a 467-residue protein sequence, read N- to C-terminus: Fumarate hydratase class II (467 aa).

Substrate contacts are provided by residues 98–100 (SGT), R126, 129–132 (HPND), 139–141 (SSN), and T187. The Proton donor/acceptor role is filled by H188. The active site involves S318. Residues S319 and 324–326 (KVN) each bind substrate.

This sequence belongs to the class-II fumarase/aspartase family. Fumarase subfamily. Homotetramer.

The protein localises to the cytoplasm. It carries out the reaction (S)-malate = fumarate + H2O. It functions in the pathway carbohydrate metabolism; tricarboxylic acid cycle; (S)-malate from fumarate: step 1/1. Involved in the TCA cycle. Catalyzes the stereospecific interconversion of fumarate to L-malate. This is Fumarate hydratase class II from Shigella flexneri.